Here is a 251-residue protein sequence, read N- to C-terminus: Ubiquinone/menaquinone biosynthesis C-methyltransferase UbiE (251 aa).

S-adenosyl-L-methionine-binding positions include T74, D95, and 123–124 (NA).

Belongs to the class I-like SAM-binding methyltransferase superfamily. MenG/UbiE family.

It catalyses the reaction a 2-demethylmenaquinol + S-adenosyl-L-methionine = a menaquinol + S-adenosyl-L-homocysteine + H(+). It carries out the reaction a 2-methoxy-6-(all-trans-polyprenyl)benzene-1,4-diol + S-adenosyl-L-methionine = a 5-methoxy-2-methyl-3-(all-trans-polyprenyl)benzene-1,4-diol + S-adenosyl-L-homocysteine + H(+). It functions in the pathway quinol/quinone metabolism; menaquinone biosynthesis; menaquinol from 1,4-dihydroxy-2-naphthoate: step 2/2. Its pathway is cofactor biosynthesis; ubiquinone biosynthesis. Its function is as follows. Methyltransferase required for the conversion of demethylmenaquinol (DMKH2) to menaquinol (MKH2) and the conversion of 2-polyprenyl-6-methoxy-1,4-benzoquinol (DDMQH2) to 2-polyprenyl-3-methyl-6-methoxy-1,4-benzoquinol (DMQH2). The sequence is that of Ubiquinone/menaquinone biosynthesis C-methyltransferase UbiE from Shewanella baltica (strain OS155 / ATCC BAA-1091).